Reading from the N-terminus, the 338-residue chain is Uroporphyrinogen decarboxylase (338 aa).

Substrate is bound by residues arginine 27 to arginine 31, aspartate 77, tyrosine 151, serine 203, and histidine 317.

This sequence belongs to the uroporphyrinogen decarboxylase family. As to quaternary structure, homodimer.

It localises to the cytoplasm. It catalyses the reaction uroporphyrinogen III + 4 H(+) = coproporphyrinogen III + 4 CO2. It participates in porphyrin-containing compound metabolism; protoporphyrin-IX biosynthesis; coproporphyrinogen-III from 5-aminolevulinate: step 4/4. In terms of biological role, catalyzes the decarboxylation of four acetate groups of uroporphyrinogen-III to yield coproporphyrinogen-III. This chain is Uroporphyrinogen decarboxylase, found in Wolbachia sp. subsp. Drosophila simulans (strain wRi).